A 264-amino-acid chain; its full sequence is S-adenosylmethionine decarboxylase proenzyme (264 aa).

Catalysis depends on S112, which acts as the Schiff-base intermediate with substrate; via pyruvic acid. Pyruvic acid (Ser); by autocatalysis is present on S112. Catalysis depends on H117, which acts as the Proton acceptor; for processing activity. C140 serves as the catalytic Proton donor; for catalytic activity.

This sequence belongs to the prokaryotic AdoMetDC family. Type 2 subfamily. In terms of assembly, heterooctamer of four alpha and four beta chains arranged as a tetramer of alpha/beta heterodimers. Requires pyruvate as cofactor. Is synthesized initially as an inactive proenzyme. Formation of the active enzyme involves a self-maturation process in which the active site pyruvoyl group is generated from an internal serine residue via an autocatalytic post-translational modification. Two non-identical subunits are generated from the proenzyme in this reaction, and the pyruvate is formed at the N-terminus of the alpha chain, which is derived from the carboxyl end of the proenzyme. The post-translation cleavage follows an unusual pathway, termed non-hydrolytic serinolysis, in which the side chain hydroxyl group of the serine supplies its oxygen atom to form the C-terminus of the beta chain, while the remainder of the serine residue undergoes an oxidative deamination to produce ammonia and the pyruvoyl group blocking the N-terminus of the alpha chain.

It catalyses the reaction S-adenosyl-L-methionine + H(+) = S-adenosyl 3-(methylsulfanyl)propylamine + CO2. Its pathway is amine and polyamine biosynthesis; S-adenosylmethioninamine biosynthesis; S-adenosylmethioninamine from S-adenosyl-L-methionine: step 1/1. Its function is as follows. Catalyzes the decarboxylation of S-adenosylmethionine to S-adenosylmethioninamine (dcAdoMet), the propylamine donor required for the synthesis of the polyamines spermine and spermidine from the diamine putrescine. This Klebsiella pneumoniae subsp. pneumoniae (strain ATCC 700721 / MGH 78578) protein is S-adenosylmethionine decarboxylase proenzyme.